Consider the following 448-residue polypeptide: N-succinylarginine dihydrolase (448 aa).

Substrate is bound by residues A19–S28, N110, and H137–R138. E174 is an active-site residue. R216 serves as a coordination point for substrate. H252 is a catalytic residue. Residues D254 and N366 each coordinate substrate. C372 (nucleophile) is an active-site residue.

Belongs to the succinylarginine dihydrolase family. In terms of assembly, homodimer.

The enzyme catalyses N(2)-succinyl-L-arginine + 2 H2O + 2 H(+) = N(2)-succinyl-L-ornithine + 2 NH4(+) + CO2. Its pathway is amino-acid degradation; L-arginine degradation via AST pathway; L-glutamate and succinate from L-arginine: step 2/5. Its function is as follows. Catalyzes the hydrolysis of N(2)-succinylarginine into N(2)-succinylornithine, ammonia and CO(2). The chain is N-succinylarginine dihydrolase from Legionella pneumophila (strain Lens).